Here is a 64-residue protein sequence, read N- to C-terminus: Insect toxin OsI1 (64 aa).

The LCN-type CS-alpha/beta domain maps to 1–61 (DGYPKQKDGC…MWKYETNTCG (61 aa)). 4 cysteine pairs are disulfide-bonded: C10-C60, C14-C35, C21-C42, and C25-C44. Residue G61 is modified to Glycine amide.

Belongs to the long (4 C-C) scorpion toxin superfamily. Sodium channel inhibitor family. Beta subfamily. As to expression, expressed by the venom gland.

Its subcellular location is the secreted. In terms of biological role, depressant insect beta-toxins cause a transient contraction paralysis followed by a slow flaccid paralysis. They bind voltage-independently at site-4 of sodium channels (Nav) and shift the voltage of activation toward more negative potentials thereby affecting sodium channel activation and promoting spontaneous and repetitive firing. This toxin is active only on insects. The chain is Insect toxin OsI1 from Orthochirus scrobiculosus (Central Asian scorpion).